A 141-amino-acid polypeptide reads, in one-letter code: Putative pre-16S rRNA nuclease (141 aa).

Belongs to the YqgF nuclease family.

The protein localises to the cytoplasm. In terms of biological role, could be a nuclease involved in processing of the 5'-end of pre-16S rRNA. This Vibrio parahaemolyticus serotype O3:K6 (strain RIMD 2210633) protein is Putative pre-16S rRNA nuclease.